The sequence spans 1082 residues: MSIALAFFILVLLGFSWASPSALDDTFNVSRSVGLISSSNLESCQSSPLEVGNIYNSTSASEILSTLDAKYITIIGVIGSSNSSIQDLIDSVGNSNNAASSNPTSTVTEYVDRVQTVTEYVTLSCGQAFTSTVDISSSTSSSVINSPTGTAVSSQISTLSMSPSSTPVFSPSASVSSKVASSVSYVSSEPSDSSSSTNTVILTTSVNSPAVSSSETLTSVSITSTESAYTSSSVDIAASTTASSTLPVSTSEATVSFSTDIPATPSTLSSPASSSSSYLVETSSTLTDSVFTTVTATSDSSVITYTLINSVTSSSETTNLPSSSSSLVTIGESSFPSSLLSLLTQSFSTVRSTSSSSTDQLTSASPISSSVISPSVSSPTSSILTNSGSIKSGDHQIVTTSFVQTTTHGSQVETLTYVTTLTETILTTTYDSHTFLTTITPSPSNSISYTNNTFIPSSSIKSSIVYSVTPTSAENYTSSEAFSTSSSLVVIPPVNSSLVTSSTSFTKFSSLSSSQLSTENFTSASSSLSLTNAKSSLSTPSTTIPTSNSSVSLQTSSSLIISSPIISSSLTATSTSTPALTHSITPSNTSYTSSLIPSSSTDYSSSLITVCSNVTSEISSTSLASLISTLTSQQISSNKSSEFVGQTTTEYTTSGSVGFTTTLATQSGSVPGTVLVDVPTPSWITETVTSGSVGFTTTIATPIGTTAGTVLVDIPTPSWVTETVTSGSIGFTTTIATPIGSTAGTVLVDVPTPSWVTETVTSGSVGFTTTIATPIGSTAGTVLVDIPTPSWVTETVTSGSVGFTTTIATPVGTTAGTVLVDIPTPSWVTETVTSGSVGFTTTIATPVGTTAGTVVVDVPTPSWVTETVTSGSVGFTTTIATPIGSTAGTVLVDIPTPSWVTETVTSGSVGFTTTIATPVGTTAGTVLVDIPTPSWVTETVTSGSVGFTTTIATPIGTTAGTVLVDIPTPSWVTETVTSGSVGFTTTIATPVGTTAGTVLVDIPTPSWVTETVTSGSVGFTTTIATPIGTTAGTVLVDIPQQHATTTTTTTFDGFSGYTSSYTGSITETIVIGTPHHSVVDVS.

Residues 1–18 form the signal peptide; that stretch reads MSIALAFFILVLLGFSWA. Asn28, Asn56, and Asn82 each carry an N-linked (GlcNAc...) asparagine glycan. The interval 353–374 is disordered; the sequence is TSSSSTDQLTSASPISSSVISP. N-linked (GlcNAc...) asparagine glycosylation is found at Asn451, Asn475, Asn495, Asn520, Asn548, Asn588, Asn613, and Asn638. Repeat copies occupy residues 646-681, 682-717, 718-753, 754-789, 790-825, 826-861, 862-897, 898-933, 934-969, 970-1005, and 1006-1041. Positions 720-1043 are 11 X 36 AA approximate tandem repeats; sequence VTETVTSGSI…VLVDIPQQHA (324 aa).

The protein belongs to the mam3/map4 family.

Its subcellular location is the cell surface. Its function is as follows. M cell-type specific protein involved in agglutination during conjugation. In Schizosaccharomyces pombe (strain 972 / ATCC 24843) (Fission yeast), this protein is M cell-type agglutination protein mam3.